The sequence spans 176 residues: Crossover junction endodeoxyribonuclease RuvC (176 aa).

Residues D7, E68, and D141 contribute to the active site. Positions 7, 68, and 141 each coordinate Mg(2+).

This sequence belongs to the RuvC family. In terms of assembly, homodimer which binds Holliday junction (HJ) DNA. The HJ becomes 2-fold symmetrical on binding to RuvC with unstacked arms; it has a different conformation from HJ DNA in complex with RuvA. In the full resolvosome a probable DNA-RuvA(4)-RuvB(12)-RuvC(2) complex forms which resolves the HJ. It depends on Mg(2+) as a cofactor.

Its subcellular location is the cytoplasm. It carries out the reaction Endonucleolytic cleavage at a junction such as a reciprocal single-stranded crossover between two homologous DNA duplexes (Holliday junction).. The RuvA-RuvB-RuvC complex processes Holliday junction (HJ) DNA during genetic recombination and DNA repair. Endonuclease that resolves HJ intermediates. Cleaves cruciform DNA by making single-stranded nicks across the HJ at symmetrical positions within the homologous arms, yielding a 5'-phosphate and a 3'-hydroxyl group; requires a central core of homology in the junction. The consensus cleavage sequence is 5'-(A/T)TT(C/G)-3'. Cleavage occurs on the 3'-side of the TT dinucleotide at the point of strand exchange. HJ branch migration catalyzed by RuvA-RuvB allows RuvC to scan DNA until it finds its consensus sequence, where it cleaves and resolves the cruciform DNA. The chain is Crossover junction endodeoxyribonuclease RuvC from Streptomyces avermitilis (strain ATCC 31267 / DSM 46492 / JCM 5070 / NBRC 14893 / NCIMB 12804 / NRRL 8165 / MA-4680).